The sequence spans 229 residues: Large ribosomal subunit protein uL1 (229 aa).

The protein belongs to the universal ribosomal protein uL1 family. In terms of assembly, part of the 50S ribosomal subunit.

Binds directly to 23S rRNA. The L1 stalk is quite mobile in the ribosome, and is involved in E site tRNA release. In terms of biological role, protein L1 is also a translational repressor protein, it controls the translation of the L11 operon by binding to its mRNA. This chain is Large ribosomal subunit protein uL1, found in Streptococcus pneumoniae (strain JJA).